A 94-amino-acid polypeptide reads, in one-letter code: Putative pterin-4-alpha-carbinolamine dehydratase (94 aa).

This sequence belongs to the pterin-4-alpha-carbinolamine dehydratase family.

It catalyses the reaction (4aS,6R)-4a-hydroxy-L-erythro-5,6,7,8-tetrahydrobiopterin = (6R)-L-erythro-6,7-dihydrobiopterin + H2O. This is Putative pterin-4-alpha-carbinolamine dehydratase from Mycobacteroides abscessus (strain ATCC 19977 / DSM 44196 / CCUG 20993 / CIP 104536 / JCM 13569 / NCTC 13031 / TMC 1543 / L948) (Mycobacterium abscessus).